We begin with the raw amino-acid sequence, 387 residues long: Phosphoglycerate kinase (387 aa).

Substrate is bound by residues 21–23 (DLN), Arg36, 59–62 (HLGR), Arg113, and Arg146. ATP contacts are provided by residues Lys197, Glu314, and 340 to 343 (GGDT).

It belongs to the phosphoglycerate kinase family. As to quaternary structure, monomer.

It is found in the cytoplasm. It catalyses the reaction (2R)-3-phosphoglycerate + ATP = (2R)-3-phospho-glyceroyl phosphate + ADP. It functions in the pathway carbohydrate degradation; glycolysis; pyruvate from D-glyceraldehyde 3-phosphate: step 2/5. The chain is Phosphoglycerate kinase from Pseudomonas syringae pv. syringae (strain B728a).